The chain runs to 86 residues: Large ribosomal subunit protein bL31 (86 aa).

The tract at residues 64–86 (KYGMGSANSSESKDQKEEKDSKK) is disordered. A compositionally biased stretch (basic and acidic residues) spans 74–86 (ESKDQKEEKDSKK).

The protein belongs to the bacterial ribosomal protein bL31 family. Type A subfamily. In terms of assembly, part of the 50S ribosomal subunit.

In terms of biological role, binds the 23S rRNA. This is Large ribosomal subunit protein bL31 from Prochlorococcus marinus (strain MIT 9301).